The sequence spans 243 residues: Small ribosomal subunit protein uS2 (243 aa).

The protein belongs to the universal ribosomal protein uS2 family.

The polypeptide is Small ribosomal subunit protein uS2 (Chromobacterium violaceum (strain ATCC 12472 / DSM 30191 / JCM 1249 / CCUG 213 / NBRC 12614 / NCIMB 9131 / NCTC 9757 / MK)).